A 2663-amino-acid chain; its full sequence is Ankyrin repeat domain-containing protein 11 (2663 aa).

2 disordered regions span residues 1-90 (MPKG…KEPV) and 128-169 (SANS…ERGE). 2 stretches are compositionally biased toward basic and acidic residues: residues 21–54 (MVEKQTGKKDKDKVSLTKTPKLERGDGGKEVRER) and 69–90 (EQKDSDTEKQGPERKRIKKEPV). Positions 128 to 155 (SANSPVDTTPKHPSQSTVCQKGTPNSAS) are enriched in polar residues. Over residues 156–169 (KTKDKVNKRNERGE) the composition is skewed to basic and acidic residues. 4 ANK repeats span residues 167 to 196 (RGETRLHRAAIRGDARRIKELISEGADVNV), 200 to 229 (AGWTALHEACNRGYYDVAKQLLAAGAEVNT), 233 to 262 (DDDTPLHDAANNGHYKVVKLLLRYGGNPQQ), and 266 to 292 (KGETPLKVANSPTMVNLLLGKGTYTSS). A Phosphoserine modification is found at Ser-276. Disordered stretches follow at residues 289-380 (YTSS…SNSF), 398-647 (APKK…GQCS), and 723-783 (DTNK…NDLK). Over residues 295-305 (SSTESSEEEDA) the composition is skewed to acidic residues. Residues 309–320 (APSSSVDGNNTD) are compositionally biased toward polar residues. A compositionally biased stretch (basic and acidic residues) spans 356-376 (DRVPPVDDKHLLKKDYRKETK). Ser-408 bears the Phosphoserine mark. Thr-410 is modified (phosphothreonine). The residue at position 411 (Ser-411) is a Phosphoserine. Over residues 438 to 451 (KTREPSNAKQQKEK) the composition is skewed to basic and acidic residues. A compositionally biased stretch (basic residues) spans 452-462 (NKVKKKRKKET). Over residues 463–477 (KGREVRFGKRSDKFC) the composition is skewed to basic and acidic residues. A compositionally biased stretch (acidic residues) spans 481–493 (SESESSESGEDDR). Residues 513–531 (SLFSSLSASSTSSHGSSAA) are compositionally biased toward low complexity. Positions 539 to 550 (TDQHTKHWRTDN) are enriched in basic and acidic residues. Over residues 551–562 (WKTISSPAWSEV) the composition is skewed to polar residues. A compositionally biased stretch (low complexity) spans 576–588 (ESDYSSEGSSVES). 2 stretches are compositionally biased toward basic residues: residues 591–602 (PVRKRQEHRKRA) and 629–641 (VKKHKTKHKHKNK). At Ser-834 the chain carries Phosphoserine. Basic and acidic residues-rich tracts occupy residues 881-928 (VKED…EKHK), 935-1043 (SEKD…KSIL), 1059-1090 (KKDTKEKHKDTHGKDKERKASLDQGKEKKEKA), and 1099-1112 (FSEKKDDKKGKEKS). 2 disordered regions span residues 881-1043 (VKED…KSIL) and 1059-1393 (KKDT…GQYE). Ser-1079 carries the post-translational modification Phosphoserine. Thr-1120 bears the Phosphothreonine mark. Phosphoserine is present on Ser-1123. 3 stretches are compositionally biased toward basic and acidic residues: residues 1142–1301 (DLPR…DKIS), 1330–1347 (GDDKPRESACLPEKLKEK), and 1359–1393 (KSHDRERAKKEKAEKKEKGEDYKEGGSRKDSGQYE). Position 1419 is a phosphothreonine (Thr-1419). Basic and acidic residues-rich tracts occupy residues 1424 to 1446 (STEKKDKNDSEREPSKKIEKELK), 1466 to 1545 (REKW…KGDP), 1556 to 1574 (APSKDPGKKDARPREKLLG), 1587 to 1597 (LSQKDLEIEER), and 1605 to 1639 (MKQMEKLRHRSGDPKLKEKAKPADDGRKKGLDIPA). Residues 1424–1710 (STEKKDKNDS…TGVPTPTSVL (287 aa)) are disordered. Ser-1509 is subject to Phosphoserine. A Phosphoserine modification is found at Ser-1692. A compositionally biased stretch (polar residues) spans 1698–1710 (SRPTGVPTPTSVL). Ser-1792 bears the Phosphoserine mark. Positions 1814–1836 (SVPAASSYDSPMPPSMEDRAPLP) are disordered. Ser-1847 is modified (phosphoserine). 2 positions are modified to phosphotyrosine: Tyr-1850 and Tyr-1851. Ser-1852, Ser-1859, and Ser-1990 each carry phosphoserine. Disordered stretches follow at residues 1988–2019 (PESPKRFCPADPLHSAAPGPFSASEAPYPAPP) and 2131–2406 (LDLG…STQQ). Composition is skewed to low complexity over residues 2310 to 2324 (IQPEAAEPKPTAEAP) and 2391 to 2406 (RSTQQLQQQLNTSTQQ). Residues 2369–2663 (AKARGSEDDD…VNDDFVLLPA (295 aa)) are important for protein degradation.

As to quaternary structure, interacts with the PAS region of the p160 coactivators. Subject to proteasomal degradation which is probably essential to regulate its activity.

It localises to the nucleus. In terms of biological role, chromatin regulator which modulates histone acetylation and gene expression in neural precursor cells. May recruit histone deacetylases (HDACs) to the p160 coactivators/nuclear receptor complex to inhibit ligand-dependent transactivation. Has a role in proliferation and development of cortical neural precursors. May also regulate bone homeostasis. The sequence is that of Ankyrin repeat domain-containing protein 11 (ANKRD11) from Homo sapiens (Human).